Here is a 365-residue protein sequence, read N- to C-terminus: uncharacterized protein (365 aa).

Disordered regions lie at residues 119 to 157, 216 to 298, and 313 to 365; these read ERSR…QQES, RPPG…DISH, and SHHH…LSVG. Residues 326 to 340 are compositionally biased toward basic and acidic residues; sequence SDPRIESRDLPERPQ.

This is an uncharacterized protein from Homo sapiens (Human).